The following is a 536-amino-acid chain: Thiamine transport system permease protein ThiP (536 aa).

The next 12 membrane-spanning stretches (helical) occupy residues 12 to 32, 58 to 78, 95 to 115, 134 to 154, 199 to 219, 240 to 260, 293 to 313, 334 to 354, 374 to 394, 404 to 424, 463 to 483, and 506 to 526; these read WLIPGVSATTLVVAVALAAFL, FSFWQAFLSALLSVIPAIFLA, LCAMTLILPVLVAVFGILSVY, FSPYGLQGILLAHVFFNLPMA, VAALIFMLCFASFATVLSLGG, PARAAMLALLQMVCCLGLVLL, VLIVLALLLLLPPLLAVIVDG, SLRIALAAGVLCVVLTMMLLW, SGMLILAMPGIVLATGFFLLL, ADGIVIFTNALMAIPYALKVL, AQALAFACVLSIGDFGVVALF, and DGAVTALILLLLCFLLFTVIE. An ABC transmembrane type-1 1 domain is found at 56–261; the sequence is VRFSFWQAFL…VCCLGLVLLS (206 aa). In terms of domain architecture, ABC transmembrane type-1 2 spans 331–525; it reads LWTSLRIALA…LLCFLLFTVI (195 aa).

The protein belongs to the binding-protein-dependent transport system permease family. CysTW subfamily. The complex is composed of two ATP-binding proteins (ThiQ), two transmembrane proteins (ThiP) and a solute-binding protein (ThiB).

It localises to the cell inner membrane. With respect to regulation, transport is inhibited by the sulfhydryl-specific modifier N-ethylmaleimide. In terms of biological role, part of the ABC transporter complex ThiBPQ involved in thiamine import. Probably responsible for the translocation of the substrate across the membrane. This chain is Thiamine transport system permease protein ThiP (thiP), found in Escherichia coli (strain K12).